A 364-amino-acid polypeptide reads, in one-letter code: DNA replication and repair protein RecF (364 aa).

Residue 30–37 (GNNAQGKT) participates in ATP binding.

The protein belongs to the RecF family.

The protein resides in the cytoplasm. Functionally, the RecF protein is involved in DNA metabolism; it is required for DNA replication and normal SOS inducibility. RecF binds preferentially to single-stranded, linear DNA. It also seems to bind ATP. In Clostridium botulinum (strain 657 / Type Ba4), this protein is DNA replication and repair protein RecF.